Consider the following 356-residue polypeptide: MKLSRIALATMLVAAPLAAANAGVTVTPLLLGYTFQDSQHNNGGKDGNLTNGPELQDDLFVGAALGIELTPWLGFEAEYNQVKGDVDGASAGAEYKQKQINGNFYVTSDLITKNYDSKIKPYVLLGAGHYKYDFDGVNRGTRGTSEEGTLGNAGVGAFWRLNDALSLRTEARATYNADEEFWNYTALAGLNVVLGGHLKPAAPVVEVAPVEPTPVTPQPQELTEDLNMELRVFFDTNKSNIKDQYKPEIAKVAEKLSEYPNATARIEGHTDNTGPRKLNERLSLARANSVKSALVNEYNVDASRLSTQGFAWDQPIADNKTKEGRAMNRRVFATITGSRTVVVQPGQEAAAPAAAQ.

Positions 1–19 are cleaved as a signal peptide; that stretch reads MKLSRIALATMLVAAPLAA. The OmpA-like domain occupies 221–339; that stretch reads ELTEDLNMEL…RVFATITGSR (119 aa).

This sequence belongs to the outer membrane OOP (TC 1.B.6) superfamily. As to quaternary structure, homotrimer.

The protein resides in the cell outer membrane. Porin. Induces apoptosis in human cells through caspases-dependent and AIF-dependent pathways. Purified Omp38 enters the cells and localizes to the mitochondria, which leads to a release of proapoptotic molecules such as cytochrome c and AIF (apoptosis-inducing factor). The sequence is that of Outer membrane protein Omp38 (omp38) from Acinetobacter baumannii (strain ATCC 17978 / DSM 105126 / CIP 53.77 / LMG 1025 / NCDC KC755 / 5377).